Here is a 192-residue protein sequence, read N- to C-terminus: Guanylate kinase (192 aa).

The 179-residue stretch at 7–185 (GLIIILSSPS…TLKKIHEIIV (179 aa)) folds into the Guanylate kinase-like domain. 14–21 (SPSGTGKS) is an ATP binding site.

The protein belongs to the guanylate kinase family.

The protein resides in the cytoplasm. The catalysed reaction is GMP + ATP = GDP + ADP. Essential for recycling GMP and indirectly, cGMP. This chain is Guanylate kinase, found in Rickettsia felis (strain ATCC VR-1525 / URRWXCal2) (Rickettsia azadi).